A 495-amino-acid chain; its full sequence is UDP-glycosyltransferase 73C5 (495 aa).

A helical transmembrane segment spans residues 146 to 162; the sequence is ILFHGMGCFCLLCMHVL. Residues Ser-296, 356-358, 373-381, and 395-398 contribute to the UDP-alpha-D-glucose site; these read SPQ, HCGWNSTLE, and FADQ. Residues 446–477 are disordered; it reads MGESDDAKERRRRAKELGDSAHKAVEEGGSSH. A compositionally biased stretch (basic and acidic residues) spans 450 to 471; sequence DDAKERRRRAKELGDSAHKAVE.

This sequence belongs to the UDP-glycosyltransferase family. As to expression, elongating hypocotyls and root-specific. Expressed in the vascular system, in meristematic tissues of the root tip, and in the vasculature of the hypocotyl right after germination. In late stage of flower development, expressed in petals, and in abscission zones.

It is found in the membrane. Specifically catalyzes 23-O-glucosylation of brassinosteroids, resulting probably in their inactivation. Also, involved in the O-glucosylation of trans-zeatin and dihydrozeatin. Active in vitro on cis-zeatin, dihydrozeatin-9-N-Glc, and olomoucine. Also involved in the detoxification of the Fusarium mycotoxin deoxynivalenol by the transfer of glucose from UDP-glucose to the hydroxyl group at C-3. Possesses low quercetin 7-O-glucosyltransferase and 4'-O-glucosyltransferase activities in vitro. The protein is UDP-glycosyltransferase 73C5 (UGT73C5) of Arabidopsis thaliana (Mouse-ear cress).